Reading from the N-terminus, the 374-residue chain is Alanine racemase (374 aa).

Lysine 35 serves as the catalytic Proton acceptor; specific for D-alanine. N6-(pyridoxal phosphate)lysine is present on lysine 35. Arginine 133 contacts substrate. The active-site Proton acceptor; specific for L-alanine is the tyrosine 264. Position 312 (methionine 312) interacts with substrate.

It belongs to the alanine racemase family. It depends on pyridoxal 5'-phosphate as a cofactor.

It catalyses the reaction L-alanine = D-alanine. Its pathway is amino-acid biosynthesis; D-alanine biosynthesis; D-alanine from L-alanine: step 1/1. In terms of biological role, catalyzes the interconversion of L-alanine and D-alanine. May also act on other amino acids. The chain is Alanine racemase (alr) from Thermobifida fusca (strain YX).